A 66-amino-acid polypeptide reads, in one-letter code: Large ribosomal subunit protein uL29 (66 aa).

It belongs to the universal ribosomal protein uL29 family.

The sequence is that of Large ribosomal subunit protein uL29 from Borrelia duttonii (strain Ly).